The following is a 527-amino-acid chain: Low-affinity Na(+)/H(+) antiporter NhaS1 (527 aa).

A run of 11 helical transmembrane segments spans residues F18 to L38, I41 to L61, W94 to F114, I126 to F146, V169 to L189, F196 to L216, I240 to L260, I276 to I296, L311 to S331, T352 to P372, and A380 to T400.

The protein belongs to the monovalent cation:proton antiporter 1 (CPA1) transporter (TC 2.A.36) family.

It localises to the cell membrane. In terms of biological role, na(+)/H(+) antiporter that extrudes sodium in exchange for external protons. Might be able to function at relatively high concentrations of Na(+) ions. Also has Li(+)/H(+) antiport activity under K(+)-rich conditions, but it might not have any physiological relevance. The sequence is that of Low-affinity Na(+)/H(+) antiporter NhaS1 (nhaS1) from Synechocystis sp. (strain ATCC 27184 / PCC 6803 / Kazusa).